The following is a 155-amino-acid chain: Ribonuclease H (155 aa).

In terms of domain architecture, RNase H type-1 spans 4 to 145 (QQKVVEIYTD…ADALARKAIA (142 aa)). 4 residues coordinate Mg(2+): D13, E51, D73, and D137.

It belongs to the RNase H family. Monomer. Mg(2+) serves as cofactor.

The protein resides in the cytoplasm. The enzyme catalyses Endonucleolytic cleavage to 5'-phosphomonoester.. Functionally, endonuclease that specifically degrades the RNA of RNA-DNA hybrids. The polypeptide is Ribonuclease H (Bartonella tribocorum (strain CIP 105476 / IBS 506)).